A 122-amino-acid chain; its full sequence is Large ribosomal subunit protein uL14 (122 aa).

The protein belongs to the universal ribosomal protein uL14 family. In terms of assembly, part of the 50S ribosomal subunit. Forms a cluster with proteins L3 and L19. In the 70S ribosome, L14 and L19 interact and together make contacts with the 16S rRNA in bridges B5 and B8.

Binds to 23S rRNA. Forms part of two intersubunit bridges in the 70S ribosome. The sequence is that of Large ribosomal subunit protein uL14 from Marinomonas sp. (strain MWYL1).